We begin with the raw amino-acid sequence, 257 residues long: Ribosomal RNA small subunit methyltransferase A (257 aa).

Positions 12, 14, 39, 60, 85, and 105 each coordinate S-adenosyl-L-methionine.

The protein belongs to the class I-like SAM-binding methyltransferase superfamily. rRNA adenine N(6)-methyltransferase family. RsmA subfamily.

The protein localises to the cytoplasm. The enzyme catalyses adenosine(1518)/adenosine(1519) in 16S rRNA + 4 S-adenosyl-L-methionine = N(6)-dimethyladenosine(1518)/N(6)-dimethyladenosine(1519) in 16S rRNA + 4 S-adenosyl-L-homocysteine + 4 H(+). Functionally, specifically dimethylates two adjacent adenosines (A1518 and A1519) in the loop of a conserved hairpin near the 3'-end of 16S rRNA in the 30S particle. May play a critical role in biogenesis of 30S subunits. The protein is Ribosomal RNA small subunit methyltransferase A of Methylococcus capsulatus (strain ATCC 33009 / NCIMB 11132 / Bath).